A 554-amino-acid polypeptide reads, in one-letter code: Sesquithujene synthase A (554 aa).

2 residues coordinate Mg(2+): D308 and D312. Substrate is bound by residues D308 and D312. Residues 308–312 (DDMFD) carry the DDXXD motif motif. The determine the stereoselectivity of the enzyme stretch occupies residues 407-411 (SIGAN). Substrate-binding residues include R449 and N452. Mg(2+)-binding residues include N452, S456, and E460.

It belongs to the terpene synthase family. As to quaternary structure, monomer. Mg(2+) is required as a cofactor. Requires Mn(2+) as cofactor. As to expression, highly expressed in the husk. Detected in leaves.

The protein resides in the cytoplasm. It catalyses the reaction (2E,6E)-farnesyl diphosphate = sesquithujene + diphosphate. It carries out the reaction (2Z,6Z)-farnesyl diphosphate = (1S,5S,6S)-alpha-bergamotene + diphosphate. The enzyme catalyses (2E,6E)-farnesyl diphosphate = (E)-beta-farnesene + diphosphate. The catalysed reaction is (2E,6E)-farnesyl diphosphate = (S)-beta-bisabolene + diphosphate. It catalyses the reaction (2Z,6E)-farnesyl diphosphate = (-)-beta-curcumene + diphosphate. It carries out the reaction (2E,6E)-farnesyl diphosphate = gamma-curcumene + diphosphate. The enzyme catalyses (2E,6E)-farnesyl diphosphate = sesquisabinene B + diphosphate. It functions in the pathway secondary metabolite biosynthesis; terpenoid biosynthesis. Sesquiterpene synthase involved in the production after herbivore attack of a blend of volatiles that attracts natural enemies of herbivores. Converts farnesyl diphosphate to sesquithujene, (S)-beta-bisabolene, (Z)-alpha-bergamotene, sesquisabinene B and several minor products. Can also act in vitro as a monoterpene synthase, converting geranyl diphosphate to (S)-(-)-limonene, beta-myrcene and 11 other monoterpenes. The chain is Sesquithujene synthase A from Zea mays (Maize).